Reading from the N-terminus, the 75-residue chain is uncharacterized protein (75 aa).

The segment covering 1-14 (MNDNNDNNNNNKNI) has biased composition (low complexity). Residues 1 to 30 (MNDNNDNNNNNKNIDNVDDDNDDNDKGKYK) are disordered.

This is an uncharacterized protein from Dictyostelium discoideum (Social amoeba).